A 281-amino-acid chain; its full sequence is Bis(5'-nucleosyl)-tetraphosphatase, symmetrical (281 aa).

This sequence belongs to the Ap4A hydrolase family.

The enzyme catalyses P(1),P(4)-bis(5'-adenosyl) tetraphosphate + H2O = 2 ADP + 2 H(+). In terms of biological role, hydrolyzes diadenosine 5',5'''-P1,P4-tetraphosphate to yield ADP. This chain is Bis(5'-nucleosyl)-tetraphosphatase, symmetrical, found in Delftia acidovorans (strain DSM 14801 / SPH-1).